We begin with the raw amino-acid sequence, 758 residues long: CRISPR system single-strand-specific deoxyribonuclease Cas10/Csm1 (subtype III-A) (758 aa).

Positions 1–82 are HD domain; sequence MKKEKIDLFY…TYIADNIASG (82 aa). Positions 509-647 constitute a GGDEF domain; sequence KRLAVVRLDV…EKDSISLFSS (139 aa).

It belongs to the CRISPR-associated Cas10/Csm1 family. As to quaternary structure, part of the Csm effector complex that includes at least Cas10(1), Csm2(3), Csm3(5), Csm4(1), Csm5(1) and mature crRNA. The Csm complex is elongated and slightly twisted with a maximal length of 215 Angstroms and a diameter of 75-80 Angstroms. It has been modeled to have a central protein filamant of Csm3 subunits along which the dsRNA helix of paired crRNA and target RNA binds. The filament is capped at one end by Cas10 and Csm4 and at the other end by Csm5; ssDNA is thought to bind to the N-terminal HD domain of Cas10. Csm with a precursor crRNA does not include Csm5, while Cas6, the enzyme probably involved in pre-crRNA processing, is found associated with a subset of the Csm complex. Requires a divalent metal cation as cofactor.

The catalysed reaction is 6 ATP = cyclic hexaadenylate + 6 diphosphate. Its activity is regulated as follows. ssDNase activity is activated by target RNA binding to the Csm-crRNA complex and is inhibited by EDTA. Its function is as follows. CRISPR (clustered regularly interspaced short palindromic repeat) is an adaptive immune system that provides protection against mobile genetic elements (viruses, transposable elements and conjugative plasmids). CRISPR clusters contain spacers, sequences complementary to antecedent mobile elements, and target invading nucleic acids. CRISPR clusters are transcribed and processed into CRISPR RNA (crRNA). The type III-A Csm effector complex binds crRNA and acts as a crRNA-guided RNase, DNase and cyclic oligoadenylate synthase; binding of target RNA cognate to the crRNA is required for all activities. In a heterologous host this Csm effector complex restricts ssRNA phage MS2, suggesting it may target RNA viruses in vivo. In terms of biological role, csm functions as a non-specific ssDNase. Base-pairing between crRNA and target RNA to form a ternary Csm complex activates a ssDNase activity; target RNA cleavage suppresses the ssDNase, a temporal control that prevents uncontrolled DNA degradation. Viral RNA transcripts probably tether the Csm complex to the viral genome, recruiting Cas10 ssDNA activity which is able to degrade DNA in the transcription bubble, spatially controlling the DNase activity. Functionally, this subunit has a weak ssDNase activity that is dramatically activated by the ternary Csm effector complex (the crRNA, Cas proteins and a cognate target ssRNA). Target RNA and ssDNA are cleaved simultaneously, although RNase activity (of Csm3) is much faster. RNA cleavage by Csm3 is not required for ssDNase activity as Csm complex with inactive Csm3 still has ssDNase activity; however as the cleaved target RNA products dissociate away ssDNase activity decreases. Self-recognition, with subsequent repression of the ssDNase activity, occurs when the 5' handle of the crRNA bases pairs with the 3' flanking sequence of the target RNA (which would occur if the CRISPR locus were transcribed as an anti-pre-crRNA). This protein has low activity on dsDNA which is not stimulated by the Csm complex. This subunit is a single-strand-specific deoxyribonuclease (ssDNase) which digests both linear and circular ssDNA; it has both exo- and endonuclease activity. Its function is as follows. When associated with the ternary Csm effector complex (the crRNA, Cas proteins and a cognate target ssRNA) synthesizes cyclic oligoadenylates (cOA) from ATP, producing cyclic triadenylate (cA3) up to cyclic hexaadenylate (cA6), which is the active cOA. The enzyme is also able to cyclize pppA3 up to pppA6. cOAs are second messengers that induce an antiviral state important for defense against invading nucleic acids. Synthesis of cOA can occur with AMP plus ATP, 2'dATP or 3'dATP (but no other nucleotides), and requires a free 3'-OH ribose moiety. The sequence is that of CRISPR system single-strand-specific deoxyribonuclease Cas10/Csm1 (subtype III-A) from Streptococcus thermophilus.